The chain runs to 372 residues: Hydrogenase-2 small chain (372 aa).

A signal peptide (tat-type signal) is located at residues Met1–Ala37. Cys59, Cys62, Cys157, Cys191, His229, Cys232, Cys257, and Cys263 together coordinate [4Fe-4S] cluster. [3Fe-4S] cluster contacts are provided by Cys272, Cys292, and Cys295.

Belongs to the [NiFe]/[NiFeSe] hydrogenase small subunit family. In terms of assembly, heterodimer of a large and a small subunit. [4Fe-4S] cluster is required as a cofactor. It depends on [3Fe-4S] cluster as a cofactor. In terms of processing, predicted to be exported by the Tat system. The position of the signal peptide cleavage has not been experimentally proven.

The protein resides in the cell membrane. It localises to the periplasm. It carries out the reaction H2 + A = AH2. Functionally, this is one of three E.coli hydrogenases synthesized in response to different physiological conditions. HYD2 is involved in hydrogen uptake. This Escherichia coli O157:H7 protein is Hydrogenase-2 small chain (hybO).